The following is a 271-amino-acid chain: Orotidine 5'-phosphate decarboxylase (271 aa).

Lys97 functions as the Proton donor in the catalytic mechanism.

Belongs to the OMP decarboxylase family. Type 2 subfamily.

The enzyme catalyses orotidine 5'-phosphate + H(+) = UMP + CO2. Its pathway is pyrimidine metabolism; UMP biosynthesis via de novo pathway; UMP from orotate: step 2/2. The protein is Orotidine 5'-phosphate decarboxylase of Leptospira borgpetersenii serovar Hardjo-bovis (strain JB197).